A 1068-amino-acid polypeptide reads, in one-letter code: Huntingtin-interacting protein 1-related protein (1068 aa).

Methionine 1 is subject to N-acetylmethionine. The ENTH domain maps to 23–151; it reads EREQFDKTQA…SFHLKHPQFP (129 aa). Residues 346 to 644 adopt a coiled-coil conformation; that stretch reads GSMKDDRDLQ…LQDAVSKLDD (299 aa). A disordered region spans residues 582–610; the sequence is EALSQEQQRSSQEKGELRGQLAEKESQEQ. Positions 592 to 608 are enriched in basic and acidic residues; it reads SQEKGELRGQLAEKESQ. The I/LWEQ domain maps to 771 to 1012; the sequence is SLDVRQEELG…ELRKQHYVLA (242 aa). The tract at residues 867–924 is important for actin binding; the sequence is RWTEGLISASKAVGWGATQLVESADKVVLHMGKYEELIVCSHEIAASTAQLVAASKVK. A disordered region spans residues 1011 to 1068; the sequence is LAGGMGTPSEEEPSRPSPAPRSGATKKPPLAQKPSIAPRTDNQLDKKDGVYPAQLVNY.

This sequence belongs to the SLA2 family. Homodimer. Interacts with actin; homodimerization promotes actin binding. Interacts with CLTB. Interacts with HIP1. Interacts (via ENTH and I/LWEQ domains) with BCL2L10. In terms of tissue distribution, widely expressed. Expressed at lower levels in skeletal muscle and heart. The level of expression does not change appreciably during development.

Its subcellular location is the cytoplasm. It is found in the perinuclear region. The protein localises to the endomembrane system. It localises to the cytoplasmic vesicle. The protein resides in the clathrin-coated vesicle membrane. Functionally, component of clathrin-coated pits and vesicles, that may link the endocytic machinery to the actin cytoskeleton. Binds 3-phosphoinositides (via ENTH domain). May act through the ENTH domain to promote cell survival by stabilizing receptor tyrosine kinases following ligand-induced endocytosis. The protein is Huntingtin-interacting protein 1-related protein (Hip1r) of Mus musculus (Mouse).